The following is a 101-amino-acid chain: NAD(P)H-quinone oxidoreductase subunit 4L, chloroplastic (101 aa).

3 consecutive transmembrane segments (helical) span residues 2–22, 32–52, and 61–81; these read MTEY…YGLI, MCLE…SDLF, and IFSI…PAIV.

It belongs to the complex I subunit 4L family. As to quaternary structure, NDH is composed of at least 16 different subunits, 5 of which are encoded in the nucleus.

It is found in the plastid. The protein localises to the chloroplast thylakoid membrane. The catalysed reaction is a plastoquinone + NADH + (n+1) H(+)(in) = a plastoquinol + NAD(+) + n H(+)(out). The enzyme catalyses a plastoquinone + NADPH + (n+1) H(+)(in) = a plastoquinol + NADP(+) + n H(+)(out). In terms of biological role, NDH shuttles electrons from NAD(P)H:plastoquinone, via FMN and iron-sulfur (Fe-S) centers, to quinones in the photosynthetic chain and possibly in a chloroplast respiratory chain. The immediate electron acceptor for the enzyme in this species is believed to be plastoquinone. Couples the redox reaction to proton translocation, and thus conserves the redox energy in a proton gradient. This Calycanthus floridus var. glaucus (Eastern sweetshrub) protein is NAD(P)H-quinone oxidoreductase subunit 4L, chloroplastic.